Consider the following 131-residue polypeptide: Histone H3-like 4 (131 aa).

At Lys10 the chain carries N6,N6,N6-trimethyllysine; alternate. Lys10 is subject to N6,N6-dimethyllysine; alternate. Lys10 is subject to N6-acetyllysine; alternate. Position 10 is an N6-methyllysine; alternate (Lys10). Thr12 bears the Phosphothreonine mark. Lys15 is subject to N6-acetyllysine. Position 27 is a phosphoserine (Ser27). N6,N6,N6-trimethyllysine; alternate is present on Lys32. Lys32 bears the N6,N6-dimethyllysine; alternate mark. Lys32 carries the N6-methyllysine; alternate modification.

Belongs to the histone H3 family. The nucleosome is a histone octamer containing two molecules each of H2A, H2B, H3 and H4 assembled in one H3-H4 heterotetramer and two H2A-H2B heterodimers. The octamer wraps approximately 147 bp of DNA. Expressed in roots, seedlings, leaves buds and open flowers.

The protein resides in the nucleus. Its subcellular location is the chromosome. In terms of biological role, core component of nucleosome. Nucleosomes wrap and compact DNA into chromatin, limiting DNA accessibility to the cellular machineries which require DNA as a template. Histones thereby play a central role in transcription regulation, DNA repair, DNA replication and chromosomal stability. DNA accessibility is regulated via a complex set of post-translational modifications of histones, also called histone code, and nucleosome remodeling. The protein is Histone H3-like 4 of Arabidopsis thaliana (Mouse-ear cress).